The chain runs to 270 residues: Aliphatic sulfonates import ATP-binding protein SsuB (270 aa).

Residues 17–238 form the ABC transporter domain; it reads LASKGLRKTF…ARGSHRLAAL (222 aa). 49–56 is an ATP binding site; the sequence is GRSGCGKS. The tract at residues 248 to 270 is disordered; the sequence is STPGTAPEPDPVAPLPTQLRWAH.

The protein belongs to the ABC transporter superfamily. Aliphatic sulfonates importer (TC 3.A.1.17.2) family. The complex is composed of two ATP-binding proteins (SsuB), two transmembrane proteins (SsuC) and a solute-binding protein (SsuA).

The protein localises to the cell inner membrane. The enzyme catalyses ATP + H2O + aliphatic sulfonate-[sulfonate-binding protein]Side 1 = ADP + phosphate + aliphatic sulfonateSide 2 + [sulfonate-binding protein]Side 1.. Part of the ABC transporter complex SsuABC involved in aliphatic sulfonates import. Responsible for energy coupling to the transport system. In Pseudomonas putida (strain ATCC 47054 / DSM 6125 / CFBP 8728 / NCIMB 11950 / KT2440), this protein is Aliphatic sulfonates import ATP-binding protein SsuB.